Reading from the N-terminus, the 528-residue chain is Protein spinster homolog 1 (528 aa).

Residues 1 to 44 (MSGSDTAPFLSQADDTDDGPAPGTPGLPGSMGNPKSEDPAVPDQ) are disordered. A run of 12 helical transmembrane segments spans residues 50 to 70 (ITGL…YINL), 98 to 118 (GLIQ…FGYL), 126 to 146 (YLMC…SFIP), 160 to 180 (VGVG…DLFV), 187 to 207 (MLSV…IAGS), 218 to 238 (WALR…FLVV), 278 to 298 (LGFT…PAFL), 323 to 343 (LIFG…GVEI), 357 to 377 (LVCA…LACA), 381 to 401 (IVAT…NWAI), 421 to 441 (FQIV…IGSI), and 465 to 485 (MLCA…AIFI). Serine 518 is modified (phosphoserine).

It belongs to the major facilitator superfamily. Spinster (TC 2.A.1.49) family. In terms of assembly, interacts with BCL2 and BCL2L1.

The protein localises to the lysosome membrane. It catalyses the reaction a 1-acyl-sn-glycero-3-phosphocholine(out) + H(+)(out) = a 1-acyl-sn-glycero-3-phosphocholine(in) + H(+)(in). The enzyme catalyses 1-hexadecanoyl-sn-glycero-3-phosphocholine(out) + H(+)(out) = 1-hexadecanoyl-sn-glycero-3-phosphocholine(in) + H(+)(in). It carries out the reaction 1-(9Z-octadecenoyl)-sn-glycero-3-phosphocholine(out) + H(+)(out) = 1-(9Z-octadecenoyl)-sn-glycero-3-phosphocholine(in) + H(+)(in). The catalysed reaction is 1-(5Z,8Z,11Z,14Z-eicosatetraenoyl)-sn-glycero-3-phosphocholine(out) + H(+)(out) = 1-(5Z,8Z,11Z,14Z-eicosatetraenoyl)-sn-glycero-3-phosphocholine(in) + H(+)(in). It catalyses the reaction 1-(4Z,7Z,10Z,13Z,16Z,19Z-docosahexaenoyl)-sn-glycero-3-phosphocholine(out) + H(+)(out) = 1-(4Z,7Z,10Z,13Z,16Z,19Z-docosahexaenoyl)-sn-glycero-3-phosphocholine(in) + H(+)(in). The enzyme catalyses a 1-acyl-sn-glycero-3-phosphoethanolamine(out) + H(+)(out) = a 1-acyl-sn-glycero-3-phosphoethanolamine(in) + H(+)(in). It carries out the reaction 1-(9Z-octadecenoyl)-sn-glycero-3-phosphoethanolamine(out) + H(+)(out) = 1-(9Z-octadecenoyl)-sn-glycero-3-phosphoethanolamine(in) + H(+)(in). The catalysed reaction is 1-acyl-sn-glycero-3-phospho-(1'-sn-glycerol)(out) + H(+)(out) = 1-acyl-sn-glycero-3-phospho-(1'-sn-glycerol)(in) + H(+)(in). It catalyses the reaction 1-(9Z-octadecenoyl)-sn-glycero-3-phospho-(1'-sn-glycerol)(out) + H(+)(out) = 1-(9Z-octadecenoyl)-sn-glycero-3-phospho-(1'-sn-glycerol)(in) + H(+)(in). The enzyme catalyses a 1-O-(1Z-alkenyl)-sn-glycero-3-phosphocholine(out) + H(+)(out) = a 1-O-(1Z-alkenyl)-sn-glycero-3-phosphocholine(in) + H(+)(in). It carries out the reaction 1-(1Z-hexadecenyl)-sn-glycero-3-phosphocholine(out) + H(+)(out) = 1-(1Z-hexadecenyl)-sn-glycero-3-phosphocholine(in) + H(+)(in). The catalysed reaction is a 1-O-(1Z-alkenyl)-sn-glycero-3-phosphoethanolamine(out) + H(+)(out) = a 1-O-(1Z-alkenyl)-sn-glycero-3-phosphoethanolamine(in) + H(+)(in). It catalyses the reaction 1-O-(1Z-hexadecenyl)-sn-glycero-3-phosphoethanolamine(out) + H(+)(out) = 1-O-(1Z-hexadecenyl)-sn-glycero-3-phosphoethanolamine(in) + H(+)(in). In terms of biological role, plays a critical role in the phospholipid salvage pathway from lysosomes to the cytosol. Mediates the rate-limiting, proton-dependent, lysosomal efflux of lysophospholipids, which can then be reacylated by acyltransferases in the endoplasmic reticulum to form phospholipids. Selective for zwitterionic headgroups such as lysophosphatidylcholine (LPC) and lysophosphatidylethanolamine (LPE), can also transport lysophosphatidylglycerol (LPG), but not other anionic lysophospholipids, sphingosine, nor sphingomyelin. Transports lysophospholipids with saturated, monounsaturated, and polyunsaturated fatty acids, such as 1-hexadecanoyl-sn-glycero-3-phosphocholine, 1-(9Z-octadecenoyl)-sn-glycero-3-phosphocholine and 1-(4Z,7Z,10Z,13Z,16Z,19Z-docosahexaenoyl)-sn-glycero-3-phosphocholine, respectively. Can also transport lysoplasmalogen (LPC with a fatty alcohol) such as 1-(1Z-hexadecenyl)-sn-glycero-3-phosphocholine. Essential player in lysosomal homeostasis. Crucial for cell survival under conditions of nutrient limitation. May be involved in necrotic or autophagic cell death. This is Protein spinster homolog 1 (SPNS1) from Bos taurus (Bovine).